We begin with the raw amino-acid sequence, 331 residues long: Serine racemase (331 aa).

2 residues coordinate ATP: serine 34 and lysine 54. The active-site Proton acceptor is the lysine 59. Lysine 59 carries the N6-(pyridoxal phosphate)lysine modification. A Ca(2+)-binding site is contributed by threonine 81. Catalysis depends on serine 84, which acts as the Proton acceptor. Residue asparagine 86 participates in pyridoxal 5'-phosphate binding. Residue tyrosine 121 participates in ATP binding. Aspartate 178 contacts Mg(2+). The pyridoxal 5'-phosphate site is built by glycine 186, glycine 187, and glycine 188. Ca(2+) contacts are provided by glutamate 210, alanine 214, and aspartate 216. 3 residues coordinate Mg(2+): glutamate 210, alanine 214, and aspartate 216. 3 residues coordinate Mn(2+): glutamate 210, alanine 214, and aspartate 216. Lysine 278 is a binding site for ATP. Residue serine 314 participates in pyridoxal 5'-phosphate binding. Asparagine 317 contributes to the ATP binding site.

The protein belongs to the serine/threonine dehydratase family. Homodimer. Mg(2+) serves as cofactor. The cofactor is Mn(2+). Ca(2+) is required as a cofactor. Requires pyridoxal 5'-phosphate as cofactor. In terms of tissue distribution, expressed in the whole plant.

It catalyses the reaction L-serine = D-serine. The catalysed reaction is L-serine = pyruvate + NH4(+). It carries out the reaction D-serine = pyruvate + NH4(+). With respect to regulation, inhibited by hydroxylamine. Racemase activity is enhanced by Ca(2+), Mg(2+), Mn(2+), and is decreased by Ni(2+), Zn(2+). Hydratase activity is enhanced by Ca(2+), Mg(2+), Mn(2+), Cu(2+), Fe(2+), Ni(2+). Its function is as follows. Catalyzes the synthesis of D-serine from L-serine. Has dehydratase activity towards both L-serine and D-serine. Displays high substrate specificity for L-serine, whereas L-alanine, L-arginine, and L-glutamine were poor substrates. The chain is Serine racemase (SR) from Arabidopsis thaliana (Mouse-ear cress).